The sequence spans 234 residues: Large ribosomal subunit protein uL1 (234 aa).

The protein belongs to the universal ribosomal protein uL1 family. As to quaternary structure, part of the 50S ribosomal subunit.

In terms of biological role, binds directly to 23S rRNA. The L1 stalk is quite mobile in the ribosome, and is involved in E site tRNA release. Its function is as follows. Protein L1 is also a translational repressor protein, it controls the translation of the L11 operon by binding to its mRNA. This is Large ribosomal subunit protein uL1 from Yersinia enterocolitica serotype O:8 / biotype 1B (strain NCTC 13174 / 8081).